Reading from the N-terminus, the 287-residue chain is Ethylene-inducing xylanase 3 (287 aa).

Positions M1–A19 are cleaved as a signal peptide. The GH11 domain occupies Q31–A219. The active-site Nucleophile is the E115. E206 acts as the Proton donor in catalysis. In terms of domain architecture, CBM1 spans S252 to L287.

The protein belongs to the glycosyl hydrolase 11 (cellulase G) family.

The catalysed reaction is Endohydrolysis of (1-&gt;4)-beta-D-xylosidic linkages in xylans.. It participates in glycan degradation; xylan degradation. In terms of biological role, endo-1,4-beta-xylanase involved in the hydrolysis of xylan, a major structural heterogeneous polysaccharide found in plant biomass representing the second most abundant polysaccharide in the biosphere, after cellulose. Exhibits immunity-inducing activity and induces cell death in Nicotiana benthamiana. This Verticillium longisporum (Verticillium dahliae var. longisporum) protein is Ethylene-inducing xylanase 3.